Reading from the N-terminus, the 456-residue chain is GTPase Der (456 aa).

EngA-type G domains are found at residues 4–169 (PIVA…PSKE) and 178–353 (IQLA…EQHR). Residues 10–17 (GRPNVGKS), 57–61 (DTGGL), 120–123 (NKCE), 184–191 (GRPNVGKS), 231–235 (DTAGI), and 296–299 (NKWD) each bind GTP. Positions 354–439 (RRVSTSVVNE…PLKLFWRGKQ (86 aa)) constitute a KH-like domain.

This sequence belongs to the TRAFAC class TrmE-Era-EngA-EngB-Septin-like GTPase superfamily. EngA (Der) GTPase family. As to quaternary structure, associates with the 50S ribosomal subunit.

Functionally, GTPase that plays an essential role in the late steps of ribosome biogenesis. The chain is GTPase Der from Prochlorococcus marinus (strain MIT 9211).